The chain runs to 337 residues: Ketol-acid reductoisomerase (NADP(+)) (337 aa).

Positions 3–183 (VEVFYDDDAD…GGTRAGVIKT (181 aa)) constitute a KARI N-terminal Rossmann domain. Residues 26 to 29 (YGSQ), Ser52, Ser54, and 84 to 87 (DTAQ) contribute to the NADP(+) site. His109 is a catalytic residue. Gly135 provides a ligand contact to NADP(+). The KARI C-terminal knotted domain maps to 184–329 (TFTEETETDL…GRLRAMMSWV (146 aa)). Positions 192, 196, 228, and 232 each coordinate Mg(2+). Ser253 serves as a coordination point for substrate.

This sequence belongs to the ketol-acid reductoisomerase family. It depends on Mg(2+) as a cofactor.

It catalyses the reaction (2R)-2,3-dihydroxy-3-methylbutanoate + NADP(+) = (2S)-2-acetolactate + NADPH + H(+). The enzyme catalyses (2R,3R)-2,3-dihydroxy-3-methylpentanoate + NADP(+) = (S)-2-ethyl-2-hydroxy-3-oxobutanoate + NADPH + H(+). It functions in the pathway amino-acid biosynthesis; L-isoleucine biosynthesis; L-isoleucine from 2-oxobutanoate: step 2/4. Its pathway is amino-acid biosynthesis; L-valine biosynthesis; L-valine from pyruvate: step 2/4. Functionally, involved in the biosynthesis of branched-chain amino acids (BCAA). Catalyzes an alkyl-migration followed by a ketol-acid reduction of (S)-2-acetolactate (S2AL) to yield (R)-2,3-dihydroxy-isovalerate. In the isomerase reaction, S2AL is rearranged via a Mg-dependent methyl migration to produce 3-hydroxy-3-methyl-2-ketobutyrate (HMKB). In the reductase reaction, this 2-ketoacid undergoes a metal-dependent reduction by NADPH to yield (R)-2,3-dihydroxy-isovalerate. The sequence is that of Ketol-acid reductoisomerase (NADP(+)) from Salinispora tropica (strain ATCC BAA-916 / DSM 44818 / JCM 13857 / NBRC 105044 / CNB-440).